We begin with the raw amino-acid sequence, 693 residues long: Polyribonucleotide nucleotidyltransferase (693 aa).

Mg(2+) is bound by residues aspartate 489 and aspartate 495. A KH domain is found at 556-615; sequence PQIHVMNINPAKIKDVVGRGGATVKGIVEKTGAQIDTSDSGEVKVFAKDKKSMDMAVAMI. Residues 625–693 form the S1 motif domain; the sequence is GQVYKGKIVK…GRVKLSLVAR (69 aa).

The protein belongs to the polyribonucleotide nucleotidyltransferase family. Component of the RNA degradosome, which is a multiprotein complex involved in RNA processing and mRNA degradation. It depends on Mg(2+) as a cofactor.

Its subcellular location is the cytoplasm. It carries out the reaction RNA(n+1) + phosphate = RNA(n) + a ribonucleoside 5'-diphosphate. Functionally, involved in mRNA degradation. Catalyzes the phosphorolysis of single-stranded polyribonucleotides processively in the 3'- to 5'-direction. This is Polyribonucleotide nucleotidyltransferase from Francisella tularensis subsp. holarctica (strain OSU18).